The sequence spans 138 residues: uncharacterized protein (138 aa).

Residues 1–37 (MNSTFTSQPLLNRSEPRVFKEFYRLVIGCNPAWQVMA) form the signal peptide.

This sequence to H.influenzae HI_1631.

This is an uncharacterized protein from Sinorhizobium fredii (strain NBRC 101917 / NGR234).